Reading from the N-terminus, the 1396-residue chain is DNA-directed RNA polymerase subunit beta' (1396 aa).

Zn(2+) contacts are provided by C73, C75, C88, and C91. The Mg(2+) site is built by D467, D469, and D471. The Zn(2+) site is built by C817, C891, C898, and C901.

It belongs to the RNA polymerase beta' chain family. As to quaternary structure, the RNAP catalytic core consists of 2 alpha, 1 beta, 1 beta' and 1 omega subunit. When a sigma factor is associated with the core the holoenzyme is formed, which can initiate transcription. Requires Mg(2+) as cofactor. Zn(2+) serves as cofactor.

The catalysed reaction is RNA(n) + a ribonucleoside 5'-triphosphate = RNA(n+1) + diphosphate. In terms of biological role, DNA-dependent RNA polymerase catalyzes the transcription of DNA into RNA using the four ribonucleoside triphosphates as substrates. This is DNA-directed RNA polymerase subunit beta' from Orientia tsutsugamushi (strain Boryong) (Rickettsia tsutsugamushi).